The following is a 194-amino-acid chain: MSRRNPCKFEIRGHCLNGKRCHFSHNYFEWPPHALLVRQNFMLNRILKSMDKSIDTLSEISGAAELDRTEEYALGVVGVLESYIGSINNITKQSACVAMSKLLTELNSDDIKKLRDNEELNSPKIRVYNTVISYIESNRKNNKQTIHLLKRLPADVLKKTIKNTLDIHKSITINNPKELTVSDTNDHAKNNDTT.

The C3H1-type zinc-finger motif lies at 1 to 28 (MSRRNPCKFEIRGHCLNGKRCHFSHNYF). The interval 32–49 (PHALLVRQNFMLNRILKS) is oligomerization. Residues serine 58 and serine 61 each carry the phosphoserine modification. The interval 76 to 171 (VVGVLESYIG…KNTLDIHKSI (96 aa)) is globular core. Positions 126–163 (RVYNTVISYIESNRKNNKQTIHLLKRLPADVLKKTIKN) are binding to the phosphoprotein. Positions 172-194 (TINNPKELTVSDTNDHAKNNDTT) are disordered.

It belongs to the pneumoviridae M2-1 protein family. Homotetramer. The homotetramer interacts with RNA. Interacts with the phosphoprotein (P); this interaction is required for protein M2-1 function, localization in host inclusion bodies. Formation of a complex host PP1/M2-1/P allows P to target host PP1 phosphatase to the M2-1 substrate. Interacts with the nucleoprotein (N). Interacts with the matrix protein (M); this interaction directs M localization to cytoplasmic inclusions comprising viral proteins L, N, P, and M2-1 and mediates M association with the nucleocapsid. Interacts with host RELA. Interacts with host PABPC1 (via C-terminus). Phosphorylated by host in infected cells. Only dephosphorylated M2-1 is competent for viral mRNA binding. Cyclic turnover of phosphorylation-dephosphorylation of M2-1 is required for efficient viral transcription.

It localises to the virion. Its subcellular location is the host cytoplasm. The protein resides in the host nucleus. In terms of biological role, acts as a tetrameric transcription processivity factor that binds in a competitive manner to RNA and the phosphoprotein (P) to prevent premature termination during transcription. Transcription anti-terminator that enhances readthrough of intergenic junctions during viral transcription. Preferentially binds to poly(A)-rich sequences. Plays a role in the association of the matrix protein with the nucleocapsid, which initiates assembly and budding. Also, can activate host NF-kappa-B through association with host RELA. The polypeptide is Protein M2-1 (M2-1) (Human respiratory syncytial virus).